The sequence spans 311 residues: Pyrimidine-specific ribonucleoside hydrolase RihA (311 aa).

The active site involves His-240.

Belongs to the IUNH family. RihA subfamily.

Its function is as follows. Hydrolyzes cytidine or uridine to ribose and cytosine or uracil, respectively. This chain is Pyrimidine-specific ribonucleoside hydrolase RihA, found in Salmonella typhimurium (strain LT2 / SGSC1412 / ATCC 700720).